A 771-amino-acid chain; its full sequence is 5-methyltetrahydropteroyltriglutamate--homocysteine methyltransferase (771 aa).

Residues 13 to 16 (RELK) and K128 each bind 5-methyltetrahydropteroyltri-L-glutamate. Residues 451 to 453 (IGS) and E504 each bind L-homocysteine. L-methionine contacts are provided by residues 451-453 (IGS) and E504. 5-methyltetrahydropteroyltri-L-glutamate contacts are provided by residues 535–536 (RC) and W581. D619 serves as a coordination point for L-homocysteine. D619 serves as a coordination point for L-methionine. E625 lines the 5-methyltetrahydropteroyltri-L-glutamate pocket. Zn(2+) contacts are provided by H661, C663, and E685. The Proton donor role is filled by H714. C746 is a Zn(2+) binding site.

It belongs to the vitamin-B12 independent methionine synthase family. Zn(2+) serves as cofactor.

It catalyses the reaction 5-methyltetrahydropteroyltri-L-glutamate + L-homocysteine = tetrahydropteroyltri-L-glutamate + L-methionine. It functions in the pathway amino-acid biosynthesis; L-methionine biosynthesis via de novo pathway; L-methionine from L-homocysteine (MetE route): step 1/1. Functionally, catalyzes the transfer of a methyl group from 5-methyltetrahydrofolate to homocysteine resulting in methionine formation. The sequence is that of 5-methyltetrahydropteroyltriglutamate--homocysteine methyltransferase from Nitrobacter winogradskyi (strain ATCC 25391 / DSM 10237 / CIP 104748 / NCIMB 11846 / Nb-255).